Here is a 282-residue protein sequence, read N- to C-terminus: Pantothenate synthetase (282 aa).

Met30 to His37 lines the ATP pocket. The active-site Proton donor is His37. Position 61 (Gln61) interacts with (R)-pantoate. Residue Gln61 participates in beta-alanine binding. Gly147–Asp150 contacts ATP. A (R)-pantoate-binding site is contributed by Gln153. ATP contacts are provided by residues Val176 and Lys184–Arg187.

It belongs to the pantothenate synthetase family. Homodimer.

The protein resides in the cytoplasm. The catalysed reaction is (R)-pantoate + beta-alanine + ATP = (R)-pantothenate + AMP + diphosphate + H(+). It participates in cofactor biosynthesis; (R)-pantothenate biosynthesis; (R)-pantothenate from (R)-pantoate and beta-alanine: step 1/1. In terms of biological role, catalyzes the condensation of pantoate with beta-alanine in an ATP-dependent reaction via a pantoyl-adenylate intermediate. This is Pantothenate synthetase from Bacillus cereus (strain ZK / E33L).